A 157-amino-acid polypeptide reads, in one-letter code: Lipoprotein signal peptidase (157 aa).

3 helical membrane passes run 10 to 30 (LIFI…KYAI), 58 to 78 (FLEG…FIFL), and 84 to 104 (LFKN…SNVL). Active-site residues include D114 and D131. The helical transmembrane segment at 122 to 142 (FDFAIFNFADVMIDVGVGVLL) threads the bilayer.

Belongs to the peptidase A8 family.

The protein localises to the cell inner membrane. The catalysed reaction is Release of signal peptides from bacterial membrane prolipoproteins. Hydrolyzes -Xaa-Yaa-Zaa-|-(S,diacylglyceryl)Cys-, in which Xaa is hydrophobic (preferably Leu), and Yaa (Ala or Ser) and Zaa (Gly or Ala) have small, neutral side chains.. Its pathway is protein modification; lipoprotein biosynthesis (signal peptide cleavage). Its function is as follows. This protein specifically catalyzes the removal of signal peptides from prolipoproteins. This Helicobacter pylori (strain Shi470) protein is Lipoprotein signal peptidase.